A 399-amino-acid chain; its full sequence is Flavohemoprotein (399 aa).

The region spanning 1 to 138 (MLDNKTIEII…IADAFIGIEK (138 aa)) is the Globin domain. Position 85 (His-85) interacts with heme b. Catalysis depends on charge relay system residues Tyr-95 and Glu-137. Positions 149-399 (GGWKEYKPFV…GPQLSLAQSV (251 aa)) are reductase. The FAD-binding FR-type domain occupies 152–255 (KEYKPFVIAK…SAPAGDFVLD (104 aa)). FAD contacts are provided by residues Tyr-190 and 206–209 (RQYS). 268 to 273 (GVGITP) is a binding site for NADP(+). 388–391 (LFGP) serves as a coordination point for FAD.

The protein belongs to the globin family. Two-domain flavohemoproteins subfamily. It in the C-terminal section; belongs to the flavoprotein pyridine nucleotide cytochrome reductase family. Heme b is required as a cofactor. FAD serves as cofactor.

The catalysed reaction is 2 nitric oxide + NADPH + 2 O2 = 2 nitrate + NADP(+) + H(+). It carries out the reaction 2 nitric oxide + NADH + 2 O2 = 2 nitrate + NAD(+) + H(+). In terms of biological role, is involved in NO detoxification in an aerobic process, termed nitric oxide dioxygenase (NOD) reaction that utilizes O(2) and NAD(P)H to convert NO to nitrate, which protects the bacterium from various noxious nitrogen compounds. Therefore, plays a central role in the inducible response to nitrosative stress. This Bacillus subtilis (strain 168) protein is Flavohemoprotein (hmp).